Consider the following 621-residue polypeptide: tRNA uridine 5-carboxymethylaminomethyl modification enzyme MnmG (621 aa).

Position 8 to 13 (8 to 13) interacts with FAD; that stretch reads GAGHAG. Residues 199-227 form a disordered region; the sequence is PRIDRRSVDYSRVEEQKGDENPPPFSFST. The span at 200 to 218 shows a compositional bias: basic and acidic residues; the sequence is RIDRRSVDYSRVEEQKGDE. 269–283 serves as a coordination point for NAD(+); the sequence is GPRYCPSIEDKIFRF.

It belongs to the MnmG family. Homodimer. Heterotetramer of two MnmE and two MnmG subunits. Requires FAD as cofactor.

Its subcellular location is the cytoplasm. Functionally, NAD-binding protein involved in the addition of a carboxymethylaminomethyl (cmnm) group at the wobble position (U34) of certain tRNAs, forming tRNA-cmnm(5)s(2)U34. The chain is tRNA uridine 5-carboxymethylaminomethyl modification enzyme MnmG from Chlorobium luteolum (strain DSM 273 / BCRC 81028 / 2530) (Pelodictyon luteolum).